Reading from the N-terminus, the 187-residue chain is Small ribosomal subunit protein uS5 (187 aa).

The tract at residues 1-20 is disordered; it reads MAERENRRDRRDDRSREETP. An S5 DRBM domain is found at 22–85; that stretch reads FADRLVAINR…EQAKRQMIRV (64 aa). Positions 154–174 are disordered; it reads DGLKRESSPRQVAQRRGKKVA.

Belongs to the universal ribosomal protein uS5 family. As to quaternary structure, part of the 30S ribosomal subunit. Contacts proteins S4 and S8.

With S4 and S12 plays an important role in translational accuracy. Its function is as follows. Located at the back of the 30S subunit body where it stabilizes the conformation of the head with respect to the body. This chain is Small ribosomal subunit protein uS5, found in Cereibacter sphaeroides (strain ATCC 17025 / ATH 2.4.3) (Rhodobacter sphaeroides).